The primary structure comprises 115 residues: Holo-[acyl-carrier-protein] synthase (115 aa).

Mg(2+) is bound by residues D6 and E51.

This sequence belongs to the P-Pant transferase superfamily. AcpS family. Mg(2+) serves as cofactor.

It localises to the cytoplasm. The enzyme catalyses apo-[ACP] + CoA = holo-[ACP] + adenosine 3',5'-bisphosphate + H(+). Functionally, transfers the 4'-phosphopantetheine moiety from coenzyme A to a Ser of acyl-carrier-protein. This is Holo-[acyl-carrier-protein] synthase from Campylobacter jejuni (strain RM1221).